The sequence spans 409 residues: Arginine biosynthesis bifunctional protein ArgJ (409 aa).

Substrate is bound by residues Thr-156, Lys-182, Thr-193, Glu-280, Asn-404, and Ser-409. Thr-193 functions as the Nucleophile in the catalytic mechanism.

The protein belongs to the ArgJ family. As to quaternary structure, heterotetramer of two alpha and two beta chains.

The protein localises to the cytoplasm. The catalysed reaction is N(2)-acetyl-L-ornithine + L-glutamate = N-acetyl-L-glutamate + L-ornithine. It carries out the reaction L-glutamate + acetyl-CoA = N-acetyl-L-glutamate + CoA + H(+). It participates in amino-acid biosynthesis; L-arginine biosynthesis; L-ornithine and N-acetyl-L-glutamate from L-glutamate and N(2)-acetyl-L-ornithine (cyclic): step 1/1. The protein operates within amino-acid biosynthesis; L-arginine biosynthesis; N(2)-acetyl-L-ornithine from L-glutamate: step 1/4. Functionally, catalyzes two activities which are involved in the cyclic version of arginine biosynthesis: the synthesis of N-acetylglutamate from glutamate and acetyl-CoA as the acetyl donor, and of ornithine by transacetylation between N(2)-acetylornithine and glutamate. This is Arginine biosynthesis bifunctional protein ArgJ from Ralstonia nicotianae (strain ATCC BAA-1114 / GMI1000) (Ralstonia solanacearum).